The chain runs to 443 residues: UDP-N-acetylmuramate--L-alanine ligase (443 aa).

110–116 (GAHGKTS) contributes to the ATP binding site.

The protein belongs to the MurCDEF family.

It localises to the cytoplasm. It carries out the reaction UDP-N-acetyl-alpha-D-muramate + L-alanine + ATP = UDP-N-acetyl-alpha-D-muramoyl-L-alanine + ADP + phosphate + H(+). The protein operates within cell wall biogenesis; peptidoglycan biosynthesis. Cell wall formation. The protein is UDP-N-acetylmuramate--L-alanine ligase of Streptococcus suis (strain 98HAH33).